Here is a 379-residue protein sequence, read N- to C-terminus: Nematocin receptor 1 (379 aa).

Topologically, residues 19 to 48 are extracellular; the sequence is HNLYLFQMLELQENITDSQPMDPPSLEIMM. N-linked (GlcNAc...) asparagine glycosylation occurs at N32. The chain crosses the membrane as a helical span at residues 49 to 69; it reads LHHLMIILVTLFGNTLLIYVI. Topologically, residues 70–95 are cytoplasmic; that stretch reads YKNNAVLRRKRVTPVQMLMLHMCAAD. A helical membrane pass occupies residues 96-116; the sequence is ILFALISVGPTMAITATVPFF. At 117–124 the chain is on the extracellular side; that stretch reads YGPNLLCK. A disulfide bond links C123 and C196. A helical membrane pass occupies residues 125–145; it reads LTKFLQVIPMYASSFLLVAIS. Over 146 to 168 the chain is Cytoplasmic; sequence ADRYQAICRPLASMKSSIYNRPA. A helical membrane pass occupies residues 169 to 189; that stretch reads LYSGIAWTAAILFSTPQLYLF. Residues 190-207 are Extracellular-facing; that stretch reads EKRNGDCSENYTTALQYQ. N199 carries N-linked (GlcNAc...) asparagine glycosylation. Residues 208–228 traverse the membrane as a helical segment; sequence LYVCLFNSVVWLLPSAIAGWL. Residues 229 to 289 lie on the Cytoplasmic side of the membrane; sequence YLCVCKAVWK…DRRRVQTVKL (61 aa). A helical transmembrane segment spans residues 290 to 310; the sequence is TLTIVAANFVLWAPFCITSVI. Over 311-320 the chain is Extracellular; it reads DAVWPTAINS. An N-linked (GlcNAc...) asparagine glycan is attached at N319. A helical transmembrane segment spans residues 321–343; it reads TFATYIMFFGNLNSCMNPWLWFH. Residues 344–379 are Cytoplasmic-facing; that stretch reads FNRKQLKRACPCRKSSEPLIQSLVYVHVMTSEQSDF.

The protein belongs to the G-protein coupled receptor 1 family. Vasopressin/oxytocin receptor subfamily. Detected in the left ASE gustatory neuron, the chemosensory neuron pairs ASH and ADF, and the PQR tail neuron. In males, detected in hook and tail sensory neurons involved in vulval sensing and hermaphrodite contact, and in spicule protractor muscles.

It localises to the cell membrane. In terms of biological role, receptor for nematocin. The activity of this receptor is mediated by G proteins which activate a phosphatidylinositol-calcium second messenger system. The activity of this receptor may be modulated by ntr-2, leading to reduced intracellular cAMP production. Plays a role in gustatory associative learning. Also plays a role in male mating behavior. This Caenorhabditis elegans protein is Nematocin receptor 1.